Reading from the N-terminus, the 896-residue chain is Translation initiation factor IF-2 (896 aa).

The segment covering 117 to 174 has biased composition (basic and acidic residues); that stretch reads AEAEAKAKAEAEAKAKVDAEAKVKAKAEAEAKAKAKVQTEKPAAETAEDKAAKAEEAK. A disordered region spans residues 117–303; the sequence is AEAEAKAKAE…TRSVAPESMD (187 aa). Over residues 175–195 the composition is skewed to low complexity; the sequence is LLAAQDAVAKAKANEEASAAA. Residues 196–227 are compositionally biased toward basic and acidic residues; sequence DEARRLAEENEKRWAEEEKARKEAEKSVDHHV. A compositionally biased stretch (low complexity) spans 254–268; it reads PSANAGNNANANAGA. The 168-residue stretch at 396–563 folds into the tr-type G domain; that stretch reads PRAPVVTIMG…GILLEAEVLE (168 aa). The G1 stretch occupies residues 405–412; sequence GHVDHGKT. 405–412 contributes to the GTP binding site; sequence GHVDHGKT. Residues 430–434 form a G2 region; the sequence is GITQH. Positions 451 to 454 are G3; it reads DTPG. GTP contacts are provided by residues 451–455 and 505–508; these read DTPGH and NKID. The interval 505-508 is G4; it reads NKID. The G5 stretch occupies residues 541–543; sequence SAK.

The protein belongs to the TRAFAC class translation factor GTPase superfamily. Classic translation factor GTPase family. IF-2 subfamily.

The protein localises to the cytoplasm. In terms of biological role, one of the essential components for the initiation of protein synthesis. Protects formylmethionyl-tRNA from spontaneous hydrolysis and promotes its binding to the 30S ribosomal subunits. Also involved in the hydrolysis of GTP during the formation of the 70S ribosomal complex. In Shewanella pealeana (strain ATCC 700345 / ANG-SQ1), this protein is Translation initiation factor IF-2.